A 423-amino-acid polypeptide reads, in one-letter code: Anthranilate 1,2-dioxygenase large subunit (423 aa).

Residues 53–168 (WNFVALEAEI…VDSYRGLVFA (116 aa)) form the Rieske domain. Positions 95, 97, 115, and 118 each coordinate [2Fe-2S] cluster. Fe cation is bound by residues His223, His228, and Asp370.

The protein belongs to the bacterial ring-hydroxylating dioxygenase alpha subunit family. Part of a multicomponent enzyme system composed of a reductase (AndAa), a ferredoxin (AndAb) and a two-subunit oxygenase component (AndAc and AndAd). The cofactor is Fe cation. [2Fe-2S] cluster is required as a cofactor.

The catalysed reaction is anthranilate + NADH + O2 + 3 H(+) = catechol + NH4(+) + CO2 + NAD(+). It carries out the reaction anthranilate + NADPH + O2 + 3 H(+) = catechol + NH4(+) + CO2 + NADP(+). It functions in the pathway aromatic compound metabolism; anthranilate degradation via hydroxylation; catechol from anthranilate: step 1/1. Its function is as follows. Oxygenase component of anthranilate dioxygenase multicomponent enzyme system which catalyzes the incorporation of both atoms of molecular oxygen into anthranilate to form catechol. Can also act on benzoate and salicylate but not on 2-chlorobenzoate or o-toluate. This is Anthranilate 1,2-dioxygenase large subunit from Burkholderia cepacia (Pseudomonas cepacia).